Here is a 305-residue protein sequence, read N- to C-terminus: UDP-3-O-acyl-N-acetylglucosamine deacetylase (305 aa).

Residues histidine 79, histidine 238, and aspartate 242 each coordinate Zn(2+). Histidine 265 acts as the Proton donor in catalysis.

The protein belongs to the LpxC family. It depends on Zn(2+) as a cofactor.

The enzyme catalyses a UDP-3-O-[(3R)-3-hydroxyacyl]-N-acetyl-alpha-D-glucosamine + H2O = a UDP-3-O-[(3R)-3-hydroxyacyl]-alpha-D-glucosamine + acetate. Its pathway is glycolipid biosynthesis; lipid IV(A) biosynthesis; lipid IV(A) from (3R)-3-hydroxytetradecanoyl-[acyl-carrier-protein] and UDP-N-acetyl-alpha-D-glucosamine: step 2/6. Its function is as follows. Catalyzes the hydrolysis of UDP-3-O-myristoyl-N-acetylglucosamine to form UDP-3-O-myristoylglucosamine and acetate, the committed step in lipid A biosynthesis. The chain is UDP-3-O-acyl-N-acetylglucosamine deacetylase from Vibrio vulnificus (strain CMCP6).